The sequence spans 183 residues: 2-hydroxy-1,4-benzoquinone reductase (183 aa).

Residues 11–18, 77–80, and S113 contribute to the FMN site; these read SLRRDSFN and EYNR.

Belongs to the SsuE family. Homotetramer. It depends on FMN as a cofactor.

The enzyme catalyses 2-hydroxy-1,4-benzoquinone + NADH + 2 H(+) = benzene-1,2,4-triol + NAD(+). In terms of biological role, involved in the metabolism of 4-aminophenol. Catalyzes the reduction of the auto-oxidation product 2-hydroxy-1,4-benzoquinone back to hydroxyquinol. Has a broad substrate specificity toward benzoquinones, converting them to the corresponding 1,4-benzenediols. The protein is 2-hydroxy-1,4-benzoquinone reductase of Burkholderia sp.